Consider the following 347-residue polypeptide: NADH-ubiquinone oxidoreductase chain 2 (347 aa).

Transmembrane regions (helical) follow at residues 5–22, 26–45, 60–80, 150–170, 178–198, 200–220, 237–257, 274–294, and 327–347; these read ILAI…MVLI, WLTI…PILM, FLTQ…NLLL, NPNL…WGGL, ILAY…TYNP, LMLL…MLFM, LPLI…LPPL, DMAI…YFYM, and PPLI…LTLF.

This sequence belongs to the complex I subunit 2 family. As to quaternary structure, core subunit of respiratory chain NADH dehydrogenase (Complex I) which is composed of 45 different subunits. Interacts with TMEM242.

The protein localises to the mitochondrion inner membrane. It catalyses the reaction a ubiquinone + NADH + 5 H(+)(in) = a ubiquinol + NAD(+) + 4 H(+)(out). In terms of biological role, core subunit of the mitochondrial membrane respiratory chain NADH dehydrogenase (Complex I) which catalyzes electron transfer from NADH through the respiratory chain, using ubiquinone as an electron acceptor. Essential for the catalytic activity and assembly of complex I. The chain is NADH-ubiquinone oxidoreductase chain 2 from Martes zibellina (Sable).